Here is a 251-residue protein sequence, read N- to C-terminus: Protein DEEPER ROOTING 1 (251 aa).

The short motif at 46 to 52 is the IGT motif element; the sequence is SLLAIGT. Positions 64 to 105 form a coiled coil; that stretch reads VENSSDNVQSVQDTVKFTEEEVDKIRKEFETLLAIKDQAEAQ.

This sequence belongs to the LAZY family.

Involved in the control of root growth angle. Involved in cell elongation in the root tip that causes asymmetric root growth and downward bending of the root in response to gravity. The chain is Protein DEEPER ROOTING 1 from Oryza sativa subsp. japonica (Rice).